The chain runs to 480 residues: Lysosomal protective protein (480 aa).

An N-terminal signal peptide occupies residues 1–28 (MIRAAPPPLFLLLLLLLLLVSWASRGEA). 4 cysteine pairs are disulfide-bonded: C88/C362, C240/C256, C241/C246, and C281/C331. N145 is a glycosylation site (N-linked (GlcNAc...) asparagine). The active site involves S178. N333 carries N-linked (GlcNAc...) asparagine glycosylation. Catalysis depends on residues D400 and H457.

The protein belongs to the peptidase S10 family. In terms of assembly, heterodimer of a 32 kDa chain and a 20 kDa chain; disulfide-linked.

The protein localises to the lysosome. The enzyme catalyses Release of a C-terminal amino acid with broad specificity.. In terms of biological role, protective protein appears to be essential for both the activity of beta-galactosidase and neuraminidase, it associates with these enzymes and exerts a protective function necessary for their stability and activity. This protein is also a carboxypeptidase and can deamidate tachykinins. The protein is Lysosomal protective protein (CTSA) of Homo sapiens (Human).